A 785-amino-acid polypeptide reads, in one-letter code: Putative endonuclease MutS2 (785 aa).

Residue 335–342 (GPNTGGKT) coordinates ATP. Residues 513 to 586 (TAEHNEVDTM…AEKVKAAMKE (74 aa)) adopt a coiled-coil conformation. A partially complements a deletion for mitomycin C (MMC) resistance and for chromosomal DNA transformation region spans residues 636–785 (KRDFKPGDEV…GSGVTVVELK (150 aa)). The tract at residues 641–681 (PGDEVKVLTFGQKGTLLEKTGGNEWNVQIGILKMKVKEKDL) is KOW region. In terms of domain architecture, Smr spans 710-785 (LDLRGERYEN…GSGVTVVELK (76 aa)).

Belongs to the DNA mismatch repair MutS family. MutS2 subfamily. As to quaternary structure, binds to ribosomes as a homodimer. Binds to stalled/collided disomes, association is greater in (ribosome-targeted) antibiotic-treated cells (with increased stalling at specific mRNA sites). The clamp domain of one monomer binds the A-site finger, the 23S rRNA of the central protuberance and ribosomal protein uL5 of the leading (stalled) ribosome, while the other monomer binds in a gap between the ribosomal central protuberance and the L1 stalk of the leading ribosome.

The protein resides in the cytoplasm. Acts as a ribosome collision sensor splitting the ribosome into its 2 subunits. Detects stalled/collided disomes (pairs of ribosomes where the leading ribosome is stalled and a second ribosome has collided with it) which it binds and splits, by an ATP-hydrolysis driven conformational change. Does not seem to have endoribonuclease activity (in the context of ribosome stalling). Acts upstream of the ribosome quality control system (RQC), a ribosome-associated complex that mediates the extraction of incompletely synthesized nascent chains from stalled ribosomes and their subsequent degradation, probably generates substrates for RQC. Its function is as follows. Does not seem to be involved in mismatch repair or in the prevention of interspecific recombination during DNA transformation. Might be involved in homologous recombination. Putative endonuclease that may be involved in the suppression of homologous recombination and may therefore have a key role in the control of bacterial genetic diversity. The sequence is that of Putative endonuclease MutS2 from Bacillus subtilis (strain 168).